The primary structure comprises 161 residues: Large ribosomal subunit protein uL15 (161 aa).

Positions 1–43 are disordered; the sequence is MKLSEIADNVGSRKKRMRIGRGIGSGKGKTGGRGGKGQTARSG. The segment covering 21–37 has biased composition (gly residues); that stretch reads RGIGSGKGKTGGRGGKG.

Part of the 50S ribosomal subunit.

Functionally, binds to the 23S rRNA. The sequence is that of Large ribosomal subunit protein uL15 from Rhodopseudomonas palustris (strain ATCC BAA-98 / CGA009).